A 72-amino-acid polypeptide reads, in one-letter code: Small, acid-soluble spore protein 1 (72 aa).

It belongs to the alpha/beta-type SASP family.

SASP are bound to spore DNA. They are double-stranded DNA-binding proteins that cause DNA to change to an a-like conformation. They protect the DNA backbone from chemical and enzymatic cleavage and are thus involved in dormant spore's high resistance to UV light. The protein is Small, acid-soluble spore protein 1 (Sh-1) of Halobacillus halophilus (strain ATCC 35676 / DSM 2266 / JCM 20832 / KCTC 3685 / LMG 17431 / NBRC 102448 / NCIMB 2269) (Sporosarcina halophila).